Here is a 188-residue protein sequence, read N- to C-terminus: Inosine triphosphate pyrophosphatase (188 aa).

Residue 11–16 (TGNKHK) coordinates ITP. Position 39 (E39) interacts with Mg(2+). Residues K51, 67 to 68 (DT), K84, 143 to 146 (FGWN), and 171 to 172 (HR) contribute to the ITP site.

This sequence belongs to the HAM1 NTPase family. Homodimer. Mg(2+) is required as a cofactor. It depends on Mn(2+) as a cofactor.

It is found in the cytoplasm. The protein resides in the nucleus. The catalysed reaction is ITP + H2O = IMP + diphosphate + H(+). The enzyme catalyses dITP + H2O = dIMP + diphosphate + H(+). It catalyses the reaction XTP + H2O = XMP + diphosphate + H(+). In terms of biological role, pyrophosphatase that hydrolyzes non-canonical purine nucleotides such as inosine triphosphate (ITP), deoxyinosine triphosphate (dITP) or xanthosine 5'-triphosphate (XTP) to their respective monophosphate derivatives. The enzyme does not distinguish between the deoxy- and ribose forms. Probably excludes non-canonical purines from RNA and DNA precursor pools, thus preventing their incorporation into RNA and DNA and avoiding chromosomal lesions. The protein is Inosine triphosphate pyrophosphatase of Schizosaccharomyces pombe (strain 972 / ATCC 24843) (Fission yeast).